Reading from the N-terminus, the 344-residue chain is Phenylalanine--tRNA ligase alpha subunit (344 aa).

Residue E256 participates in Mg(2+) binding.

This sequence belongs to the class-II aminoacyl-tRNA synthetase family. Phe-tRNA synthetase alpha subunit type 1 subfamily. As to quaternary structure, tetramer of two alpha and two beta subunits. Requires Mg(2+) as cofactor.

The protein localises to the cytoplasm. The enzyme catalyses tRNA(Phe) + L-phenylalanine + ATP = L-phenylalanyl-tRNA(Phe) + AMP + diphosphate + H(+). The chain is Phenylalanine--tRNA ligase alpha subunit from Anoxybacillus flavithermus (strain DSM 21510 / WK1).